The chain runs to 189 residues: Orcokinin peptides (189 aa).

Positions 1–21 are cleaved as a signal peptide; sequence MRGAGGALAVAVAALLVCCSA. 2 propeptides span residues 22–124 and 145–174; these read DPHQ…TFVK and FYHL…PIGS.

This sequence belongs to the orcokinin family. Orcokinin-like peptide: Expressed in corpora cardiaca (CC), corpora allata (CA), antennal lobe (AL) and gnathal ganglion (GNG) (at protein level). Expression in CC, CA and GNG detected in some animals, in AL in few animals (at protein level). Orcokinin-like peptide precursor-related peptide: Expressed in corpora cardiaca (CC), corpora allata (CA), antennal lobe (AL) and gnathal ganglion (GNG) (at protein level). Expression in GNG detected in most animals, expression in CC, CA and AL detected in some animals (at protein level).

Its subcellular location is the secreted. Myotropic peptides. The protein is Orcokinin peptides of Agrotis ipsilon (Black cutworm moth).